A 372-amino-acid chain; its full sequence is Cytochrome b (372 aa).

Helical transmembrane passes span 25-45, 69-90, 105-125, and 170-190; these read FGSMLLTCLILQIMTGFFLAI, WIMQNLHAIGASLFFICIYIHI, WLSGTTLLIILMATAFFGYVL, and FFALHFILPFTIISLSSIHII. His-75 and His-89 together coordinate heme b. Heme b contacts are provided by His-174 and His-188. A ubiquinone is bound at residue His-193. The next 4 membrane-spanning stretches (helical) occupy residues 218–238, 280–300, 312–332, and 339–358; these read YKDMLMIIIMTAILFLILSFS, LGGTLALVMSVMILTTAPFTH, LSQIVFWTLIATFITITWTAT, and FISISQTASIFYFSFFIMNP.

This sequence belongs to the cytochrome b family. The cytochrome bc1 complex contains 3 respiratory subunits (MT-CYB, CYC1 and UQCRFS1), 2 core proteins (UQCRC1 and UQCRC2) and probably 6 low-molecular weight proteins. Heme b is required as a cofactor.

It is found in the mitochondrion inner membrane. Component of the ubiquinol-cytochrome c reductase complex (complex III or cytochrome b-c1 complex) that is part of the mitochondrial respiratory chain. The b-c1 complex mediates electron transfer from ubiquinol to cytochrome c. Contributes to the generation of a proton gradient across the mitochondrial membrane that is then used for ATP synthesis. The sequence is that of Cytochrome b (MT-CYB) from Walterinnesia aegyptia (Desert black snake).